Reading from the N-terminus, the 363-residue chain is DNA replication and repair protein RecF (363 aa).

Position 30-37 (30-37) interacts with ATP; it reads GPNGSGKT.

Belongs to the RecF family.

It localises to the cytoplasm. The RecF protein is involved in DNA metabolism; it is required for DNA replication and normal SOS inducibility. RecF binds preferentially to single-stranded, linear DNA. It also seems to bind ATP. The chain is DNA replication and repair protein RecF from Chlorobium phaeobacteroides (strain BS1).